Consider the following 173-residue polypeptide: Large ribosomal subunit protein bL12m (173 aa).

The transit peptide at 1–33 (MFRIASRQTRNLRALSSSKNWARSLVNTRSFRA) directs the protein to the mitochondrion.

The protein belongs to the bacterial ribosomal protein bL12 family. As to quaternary structure, component of the mitochondrial large ribosomal subunit (mt-LSU). Mature yeast 74S mitochondrial ribosomes consist of a small (37S) and a large (54S) subunit. The 37S small subunit contains a 15S ribosomal RNA (15S mt-rRNA) and at least 32 different proteins. The 54S large subunit contains a 21S rRNA (21S mt-rRNA) and at least 45 different proteins.

It localises to the mitochondrion. Component of the mitochondrial ribosome (mitoribosome), a dedicated translation machinery responsible for the synthesis of mitochondrial genome-encoded proteins, including at least some of the essential transmembrane subunits of the mitochondrial respiratory chain. The mitoribosomes are attached to the mitochondrial inner membrane and translation products are cotranslationally integrated into the membrane. This is Large ribosomal subunit protein bL12m (mrpl12) from Schizosaccharomyces pombe (strain 972 / ATCC 24843) (Fission yeast).